The chain runs to 113 residues: Dolichyl-diphosphooligosaccharide--protein glycosyltransferase subunit dad1 (113 aa).

Residues 1 to 30 (MSVSVFSVVSRFLDEYVSSTPQRLKLLDAY) are Cytoplasmic-facing. A helical membrane pass occupies residues 31–51 (LLYILLTGALQFLYCLLVGTF). Position 52 (proline 52) is a topological domain, lumenal. The chain crosses the membrane as a helical span at residues 53-73 (FNSFLSGFISSVGSFILAVCL). Residues 74–92 (RIQINPQNKSDFQGISPER) are Cytoplasmic-facing. Residues 93-113 (AFADFLFANTILHLVVVNFIG) traverse the membrane as a helical segment.

This sequence belongs to the DAD/OST2 family. As to quaternary structure, component of the oligosaccharyltransferase (OST) complex.

It is found in the endoplasmic reticulum membrane. Its pathway is protein modification; protein glycosylation. Its function is as follows. Subunit of the oligosaccharyl transferase (OST) complex that catalyzes the initial transfer of a defined glycan (Glc(3)Man(9)GlcNAc(2) in eukaryotes) from the lipid carrier dolichol-pyrophosphate to an asparagine residue within an Asn-X-Ser/Thr consensus motif in nascent polypeptide chains, the first step in protein N-glycosylation. N-glycosylation occurs cotranslationally and the complex associates with the Sec61 complex at the channel-forming translocon complex that mediates protein translocation across the endoplasmic reticulum (ER). All subunits are required for a maximal enzyme activity. This Xenopus laevis (African clawed frog) protein is Dolichyl-diphosphooligosaccharide--protein glycosyltransferase subunit dad1.